Here is a 286-residue protein sequence, read N- to C-terminus: Leukocyte cell-derived chemotaxin 1 (286 aa).

The chain crosses the membrane as a helical span at residues 29–49; sequence LVAFIAGAALLLFGGVGAFYL. The BRICHOS domain occupies 75–157; that stretch reads DSAEGTIVEV…FCADLPIYWH (83 aa). C102 and C149 form a disulfide bridge. Positions 166–169 are excised as a propeptide; it reads RKRR. Basic residues predominate over residues 166 to 176; that stretch reads RKRRSATRMRR. The tract at residues 166–220 is disordered; it reads RKRRSATRMRRQTSAGVNRQPARRRNSTASARDERPTGPEYNPENPYHQNQGSEG. N191 is a glycosylation site (N-linked (GlcNAc...) asparagine). 4 disulfides stabilise this stretch: C234–C238, C235–C275, C245–C269, and C249–C265.

Belongs to the chondromodulin-1 family. Post-translationally, after cleavage, the post-translationally modified ChM-I is secreted as a glycoprotein.

It is found in the secreted. The protein localises to the extracellular space. It localises to the extracellular matrix. Its subcellular location is the endomembrane system. Bifunctional growth regulator. May contribute to the rapid growth of cartilage and vascular invasion prior to the replacement of cartilage by bone during endochondral bone development. Plays a role as antiangiogenic factor in cardiac valves to suppress neovascularization. This is Leukocyte cell-derived chemotaxin 1 from Danio rerio (Zebrafish).